The primary structure comprises 158 residues: 3-hydroxyacyl-[acyl-carrier-protein] dehydratase FabZ (158 aa).

H62 is a catalytic residue.

The protein belongs to the thioester dehydratase family. FabZ subfamily.

The protein resides in the cytoplasm. It catalyses the reaction a (3R)-hydroxyacyl-[ACP] = a (2E)-enoyl-[ACP] + H2O. Functionally, involved in unsaturated fatty acids biosynthesis. Catalyzes the dehydration of short chain beta-hydroxyacyl-ACPs and long chain saturated and unsaturated beta-hydroxyacyl-ACPs. The protein is 3-hydroxyacyl-[acyl-carrier-protein] dehydratase FabZ of Novosphingobium aromaticivorans (strain ATCC 700278 / DSM 12444 / CCUG 56034 / CIP 105152 / NBRC 16084 / F199).